The chain runs to 360 residues: U7 snRNA-associated Sm-like protein LSm11 (360 aa).

The tract at residues 1–29 (MEERERGARSAGAGSPARPPSPRLDVSSD) is disordered. Phosphoserine occurs at positions 15 and 21. An Omega-N-methylarginine modification is found at R41. The segment at 68-143 (RGGGRGRGRA…PGRSRKAPRN (76 aa)) is disordered. Residues 78–94 (RGAAAGSGVPAAPGPSG) show a composition bias toward low complexity. K120 participates in a covalent cross-link: Glycyl lysine isopeptide (Lys-Gly) (interchain with G-Cter in SUMO2). S154 carries the phosphoserine modification. The Sm domain maps to 154-229 (SPLGELHRCI…LTLTRLFDRL (76 aa)). The segment at 171–204 (VHIRTFKGLRGVCTGFLVAFDKFWNMALTDVDET) is SM 1. The segment at 268-333 (ADTGRGSHKR…SRKKKRKPKV (66 aa)) is disordered. S280 is subject to Phosphoserine. The span at 299–322 (GRTTRTDGSSVGGTFSRATTLSRG) shows a compositional bias: polar residues. Residues 343 to 356 (INQIFIRGENVLLV) are SM 2.

It belongs to the snRNP Sm proteins family. In terms of assembly, component of the heptameric ring U7 snRNP complex, or U7 Sm protein core complex, at least composed of LSM10, LSM11, SNRPB, SNRPD3, SNRPE, SNRPF, SNRPG and U7 snRNA. Formation of the U7 snRNP is an ATP-dependent process mediated by a specialized SMN complex containing at least the Sm protein core complex and additionally, the U7-specific LSM10 and LSM11 proteins. Identified in a histone pre-mRNA complex, at least composed of ERI1, LSM11, SLBP, SNRPB, SYNCRIP and YBX1. Interacts (via the Sm domains) with CLNS1A. Interacts with SMN and ZNF473. Interacts with PRMT5 and WDR77.

It localises to the nucleus. Its function is as follows. Component of the U7 snRNP complex that is involved in the histone 3'-end pre-mRNA processing. Increases U7 snRNA levels but not histone 3'-end pre-mRNA processing activity, when overexpressed. Required for cell cycle progression from G1 to S phases. Binds specifically to the Sm-binding site of U7 snRNA. The chain is U7 snRNA-associated Sm-like protein LSm11 from Homo sapiens (Human).